We begin with the raw amino-acid sequence, 319 residues long: D-alanine--D-alanine ligase (319 aa).

An ATP-grasp domain is found at 120 to 315 (KRVLAQAGVP…YPELLRRLVE (196 aa)). 147 to 198 (DPPFFVKPANTGSSVGISRVERFQDLEAALALAFRYDEKAVVEKALSPVREL) contributes to the ATP binding site. Positions 270, 282, and 284 each coordinate Mg(2+).

The protein belongs to the D-alanine--D-alanine ligase family. The cofactor is Mg(2+). It depends on Mn(2+) as a cofactor.

It is found in the cytoplasm. It catalyses the reaction 2 D-alanine + ATP = D-alanyl-D-alanine + ADP + phosphate + H(+). It functions in the pathway cell wall biogenesis; peptidoglycan biosynthesis. Its function is as follows. Cell wall formation. This is D-alanine--D-alanine ligase from Thermus thermophilus (strain ATCC BAA-163 / DSM 7039 / HB27).